Consider the following 90-residue polypeptide: MVDQLESEIIGIIKNRVESEGGDGETALIVGDLTAATELTALGVDSLGLADIIWDVEQAYGYQDRDEHGRGVVGSPERRRHSGSHPRLAH.

Residues Gln4–Ala89 enclose the Carrier domain. O-(pantetheine 4'-phosphoryl)serine is present on Ser46. The interval Arg65–His90 is disordered. Positions Arg78–His90 are enriched in basic residues.

Post-translationally, 4'-phosphopantetheine is transferred from CoA to a specific serine of apo-NodF.

Proposed to synthesize nod factor fatty acyl chain. Involved in trans-2,trans-4,trans-6,cis-11-octadecatetraenoic acid biosynthesis. The protein is Nodulation protein F (nodF) of Rhizobium meliloti (Ensifer meliloti).